A 62-amino-acid chain; its full sequence is Large ribosomal subunit protein uL29 (62 aa).

The protein belongs to the universal ribosomal protein uL29 family.

The protein is Large ribosomal subunit protein uL29 of Desulfatibacillum aliphaticivorans.